The primary structure comprises 421 residues: UDP-N-acetylglucosamine 1-carboxyvinyltransferase (421 aa).

Position 22-23 (22-23) interacts with phosphoenolpyruvate; sequence KN. Residue R93 participates in UDP-N-acetyl-alpha-D-glucosamine binding. C117 serves as the catalytic Proton donor. C117 carries the post-translational modification 2-(S-cysteinyl)pyruvic acid O-phosphothioketal. Residues 122 to 126, D308, and V330 each bind UDP-N-acetyl-alpha-D-glucosamine; that span reads RPVDL.

This sequence belongs to the EPSP synthase family. MurA subfamily.

Its subcellular location is the cytoplasm. It catalyses the reaction phosphoenolpyruvate + UDP-N-acetyl-alpha-D-glucosamine = UDP-N-acetyl-3-O-(1-carboxyvinyl)-alpha-D-glucosamine + phosphate. It functions in the pathway cell wall biogenesis; peptidoglycan biosynthesis. Its function is as follows. Cell wall formation. Adds enolpyruvyl to UDP-N-acetylglucosamine. The sequence is that of UDP-N-acetylglucosamine 1-carboxyvinyltransferase from Pseudomonas paraeruginosa (strain DSM 24068 / PA7) (Pseudomonas aeruginosa (strain PA7)).